A 463-amino-acid chain; its full sequence is Argininosuccinate lyase (463 aa).

This sequence belongs to the lyase 1 family. Argininosuccinate lyase subfamily.

It localises to the cytoplasm. It carries out the reaction 2-(N(omega)-L-arginino)succinate = fumarate + L-arginine. Its pathway is amino-acid biosynthesis; L-arginine biosynthesis; L-arginine from L-ornithine and carbamoyl phosphate: step 3/3. The protein is Argininosuccinate lyase of Prochlorococcus marinus (strain NATL1A).